The sequence spans 142 residues: Large ribosomal subunit protein uL13 (142 aa).

Belongs to the universal ribosomal protein uL13 family. Part of the 50S ribosomal subunit.

In terms of biological role, this protein is one of the early assembly proteins of the 50S ribosomal subunit, although it is not seen to bind rRNA by itself. It is important during the early stages of 50S assembly. This is Large ribosomal subunit protein uL13 from Marinomonas sp. (strain MWYL1).